Here is a 114-residue protein sequence, read N- to C-terminus: Class I hydrophobin 6 (114 aa).

A signal peptide spans 1–19; the sequence is MLFKQLILVATALTTLAVA. Cystine bridges form between C33–C93, C40–C87, C41–C74, and C94–C107. N42 carries an N-linked (GlcNAc...) asparagine glycan.

The protein belongs to the fungal hydrophobin family. In terms of assembly, self-assembles to form functional amyloid fibrils called rodlets. Self-assembly into fibrillar rodlets occurs spontaneously at hydrophobic:hydrophilic interfaces and the rodlets further associate laterally to form amphipathic monolayers.

It is found in the secreted. The protein resides in the cell wall. Its function is as follows. Aerial growth, conidiation, and dispersal of filamentous fungi in the environment rely upon a capability of their secreting small amphipathic proteins called hydrophobins (HPBs) with low sequence identity. Class I can self-assemble into an outermost layer of rodlet bundles on aerial cell surfaces, conferring cellular hydrophobicity that supports fungal growth, development and dispersal; whereas Class II form highly ordered films at water-air interfaces through intermolecular interactions but contribute nothing to the rodlet structure. The protein is Class I hydrophobin 6 of Pleurotus ostreatus (strain PC15) (Oyster mushroom).